Consider the following 306-residue polypeptide: UDP-N-acetylenolpyruvoylglucosamine reductase (306 aa).

In terms of domain architecture, FAD-binding PCMH-type spans 28 to 193 (KVGGPADFLA…VSAKFSLKPG (166 aa)). Residue arginine 172 is part of the active site. The active-site Proton donor is the serine 222. Glutamate 292 is a catalytic residue.

The protein belongs to the MurB family. FAD is required as a cofactor.

The protein resides in the cytoplasm. It catalyses the reaction UDP-N-acetyl-alpha-D-muramate + NADP(+) = UDP-N-acetyl-3-O-(1-carboxyvinyl)-alpha-D-glucosamine + NADPH + H(+). It functions in the pathway cell wall biogenesis; peptidoglycan biosynthesis. Its function is as follows. Cell wall formation. The sequence is that of UDP-N-acetylenolpyruvoylglucosamine reductase from Streptococcus mutans serotype c (strain ATCC 700610 / UA159).